The chain runs to 375 residues: UDP-N-acetylglucosamine--N-acetylmuramyl-(pentapeptide) pyrophosphoryl-undecaprenol N-acetylglucosamine transferase (375 aa).

Residues 13–15 (TGG), Asn124, Arg165, Ser193, and Gln294 each bind UDP-N-acetyl-alpha-D-glucosamine.

Belongs to the glycosyltransferase 28 family. MurG subfamily.

It is found in the cell inner membrane. The catalysed reaction is di-trans,octa-cis-undecaprenyl diphospho-N-acetyl-alpha-D-muramoyl-L-alanyl-D-glutamyl-meso-2,6-diaminopimeloyl-D-alanyl-D-alanine + UDP-N-acetyl-alpha-D-glucosamine = di-trans,octa-cis-undecaprenyl diphospho-[N-acetyl-alpha-D-glucosaminyl-(1-&gt;4)]-N-acetyl-alpha-D-muramoyl-L-alanyl-D-glutamyl-meso-2,6-diaminopimeloyl-D-alanyl-D-alanine + UDP + H(+). It participates in cell wall biogenesis; peptidoglycan biosynthesis. In terms of biological role, cell wall formation. Catalyzes the transfer of a GlcNAc subunit on undecaprenyl-pyrophosphoryl-MurNAc-pentapeptide (lipid intermediate I) to form undecaprenyl-pyrophosphoryl-MurNAc-(pentapeptide)GlcNAc (lipid intermediate II). The chain is UDP-N-acetylglucosamine--N-acetylmuramyl-(pentapeptide) pyrophosphoryl-undecaprenol N-acetylglucosamine transferase from Chelativorans sp. (strain BNC1).